Here is a 191-residue protein sequence, read N- to C-terminus: Outer membrane lipoprotein DolP (191 aa).

The signal sequence occupies residues 1–18 (MKALSPIAVLISALLLQG). Cysteine 19 carries N-palmitoyl cysteine lipidation. A lipid anchor (S-diacylglycerol cysteine) is attached at cysteine 19. BON domains are found at residues 46 to 115 (DDGT…RQGQ) and 124 to 191 (NDTW…TFIK).

It belongs to the lipoprotein DolP family.

Its subcellular location is the cell outer membrane. Its function is as follows. Plays an important role in maintaining outer membrane integrity. This chain is Outer membrane lipoprotein DolP, found in Escherichia coli O157:H7.